The sequence spans 567 residues: Allo-aromadendrene synthase TPS4FN (567 aa).

5 residues coordinate (2E,6E)-farnesyl diphosphate: Arg282, Asp319, Asp323, Arg462, and Asp465. Mg(2+) contacts are provided by Asp319 and Asp323. The short motif at 319-323 (DDIYD) is the DDXXD motif element. Asp465 and Glu473 together coordinate Mg(2+).

Belongs to the terpene synthase family. Tpsb subfamily. Mg(2+) is required as a cofactor. Mn(2+) serves as cofactor.

It catalyses the reaction (2E,6E)-farnesyl diphosphate = alpha-humulene + diphosphate. It carries out the reaction (2E,6E)-farnesyl diphosphate = (+)-valencene + diphosphate. The catalysed reaction is (2E)-geranyl diphosphate = beta-myrcene + diphosphate. The enzyme catalyses (2E,6E)-farnesyl diphosphate = allo-aromadendrene + diphosphate. It catalyses the reaction (2E,6E)-farnesyl diphosphate + H2O = palustrol + diphosphate. It functions in the pathway secondary metabolite biosynthesis; terpenoid biosynthesis. In terms of biological role, involved in sesquiterpene olefins biosynthesis, constituants of cannabinoids and terpenoids-rich resins. Catalyzes mainly the conversion of (2E)-farnesyl diphosphate to allo-aromadendrene, and also produces minor products such as alpha-humulene, valencene and palustrol. Can also use (2E)-geranyl diphosphate as substrate with low efficiency, producing minor amounts of myrcene. The protein is Allo-aromadendrene synthase TPS4FN of Cannabis sativa (Hemp).